Here is a 396-residue protein sequence, read N- to C-terminus: MSEHNIRNFSINFGPQHPAAHGVLRLVLELDGEVVERVDPHIGLLHRGTEKLIEHKTYLQATPYFDRLDYVSPMNQEHAFCLAIERLAGIEVPRRAQLIRTLFCEIGRLLSHLLNVTTQAMDVGALTPPLWGFEEREKLMIFYERASGARLHANYFRPGGVHQDLPPALIDDIEAFCDPFLKVVDDLDNLVMANRIFKQRNVDIGIVSVDEAMAWGFSGVMVRGSGIPWDLRKSQPYECYEEMDFDIPVGKNGDTYDRQVIRMEEMRESVKIMRQCCAKLREPSGQGPIASIDGKFAPPPRREMKRSMEALIHHFKLYTEGFHVPEGEVYAAVEAPKGEFGVYLVSDGTNKPYRCKIRAPGFAHLQAMDWMCRGHLLADVSCVLGTLDIVFGEVDR.

This sequence belongs to the complex I 49 kDa subunit family. As to quaternary structure, NDH-1 is composed of 14 different subunits. Subunits NuoB, C, D, E, F, and G constitute the peripheral sector of the complex.

The protein localises to the cell inner membrane. The catalysed reaction is a quinone + NADH + 5 H(+)(in) = a quinol + NAD(+) + 4 H(+)(out). Functionally, NDH-1 shuttles electrons from NADH, via FMN and iron-sulfur (Fe-S) centers, to quinones in the respiratory chain. The immediate electron acceptor for the enzyme in this species is believed to be ubiquinone. Couples the redox reaction to proton translocation (for every two electrons transferred, four hydrogen ions are translocated across the cytoplasmic membrane), and thus conserves the redox energy in a proton gradient. The polypeptide is NADH-quinone oxidoreductase subunit D (Methylorubrum populi (strain ATCC BAA-705 / NCIMB 13946 / BJ001) (Methylobacterium populi)).